The sequence spans 322 residues: MKTTFLDFEQPVADLEAKIEKLRFVQDDSAVDISEEIARLEAKSQTLSKNLYAKLTPWQIAQVSRHPQRPYTLDYARHIFTDFVELHGDRTYADDKAIVGGLARFNGQSCVVIGHQKGRDTKEKILRNFGMPRPEGYRKALRLMRLAEKFGLPVFTFVDTPGAYPGIDAEERGQSEAIGRNLYVMAELKVPIITTIIGEGGSGGALAIAVGDQVMMLQYATYSVISPEGCASILWKSAEKASEAAETMGITAARLKSLGLIDRVVNEPAGGAHRDHRAMAQTLKRALQDALRQVADLSPAELVEKRLERLMSYGRFKEQKVA.

The CoA carboxyltransferase C-terminal domain maps to 32-293 (DISEEIARLE…KRALQDALRQ (262 aa)).

It belongs to the AccA family. In terms of assembly, acetyl-CoA carboxylase is a heterohexamer composed of biotin carboxyl carrier protein (AccB), biotin carboxylase (AccC) and two subunits each of ACCase subunit alpha (AccA) and ACCase subunit beta (AccD).

Its subcellular location is the cytoplasm. The catalysed reaction is N(6)-carboxybiotinyl-L-lysyl-[protein] + acetyl-CoA = N(6)-biotinyl-L-lysyl-[protein] + malonyl-CoA. The protein operates within lipid metabolism; malonyl-CoA biosynthesis; malonyl-CoA from acetyl-CoA: step 1/1. Functionally, component of the acetyl coenzyme A carboxylase (ACC) complex. First, biotin carboxylase catalyzes the carboxylation of biotin on its carrier protein (BCCP) and then the CO(2) group is transferred by the carboxyltransferase to acetyl-CoA to form malonyl-CoA. The sequence is that of Acetyl-coenzyme A carboxylase carboxyl transferase subunit alpha from Aromatoleum aromaticum (strain DSM 19018 / LMG 30748 / EbN1) (Azoarcus sp. (strain EbN1)).